The primary structure comprises 501 residues: Sucrose transport protein SUT2 (501 aa).

Over 1 to 31 (MPRRPSGGGGGAGPAAAAVRKVPLRKLLRAA) the chain is Cytoplasmic. The helical transmembrane segment at 32–52 (SVACGVQFGWALQLSLLTPYV) threads the bilayer. The Extracellular portion of the chain corresponds to 53 to 55 (QEL). A helical transmembrane segment spans residues 56 to 76 (GIPHAFASLVWLCGPLSGLLV). Over 77 to 98 (QPLVGHLSDRIAPAASPLGRRR) the chain is Cytoplasmic. Residues 99 to 119 (PFIAAGAASIAAAVLTVGFSA) form a helical membrane-spanning segment. Residues 120–135 (DLGRIFGDSITPGSTR) lie on the Extracellular side of the membrane. The chain crosses the membrane as a helical span at residues 136 to 156 (LGAIIVYLVGFWLLDVGNNAT). The Cytoplasmic segment spans residues 157–176 (QGPCRAFLADLTENDPRRTR). The helical transmembrane segment at 177 to 197 (IANAYFSLFMALGNILGYATG) threads the bilayer. The Extracellular portion of the chain corresponds to 198–222 (AYSGWYKIFPFTVTPSCSISCANLK). Residues 223–243 (SAFLLDIIILVVTTCITVASV) traverse the membrane as a helical segment. Topologically, residues 244 to 278 (QEPQSLGSDEADHPSTEQEAFLWELFGSFRYFTLP) are cytoplasmic. Residues 279 to 299 (VWMVLIVTALTWIGWFPFILF) traverse the membrane as a helical segment. Residues 300-327 (DTDWMGREIYRGSPDDPSITQSYHDGVR) lie on the Extracellular side of the membrane. The chain crosses the membrane as a helical span at residues 328–348 (MGSFGLMLNSVLLGFTSIVLE). Residues 349 to 356 (KLCRKWGA) lie on the Cytoplasmic side of the membrane. Residues 357-377 (GLVWGVSNILMALCFVAMLVI) traverse the membrane as a helical segment. Residues 378-394 (TYVAKNMDYPPSGVPPT) are Extracellular-facing. The helical transmembrane segment at 395–415 (GIVIASLVVFTILGAPLAITY) threads the bilayer. Residues 416-433 (SIPYAMAASRVENLGLGQ) lie on the Cytoplasmic side of the membrane. Residues 434-454 (GLAMGILNLAIVIPQVIVSLG) traverse the membrane as a helical segment. Topologically, residues 455 to 467 (SGPWDQLFGGGNA) are extracellular. A helical transmembrane segment spans residues 468 to 488 (PAFAVAAAASFIGGLVAILGL). Residues 489-501 (PRARIASRRRGHR) are Cytoplasmic-facing.

It belongs to the glycoside-pentoside-hexuronide (GPH) cation symporter transporter (TC 2.A.2.4) family. Homodimer. Expressed in source leaf blades.

The protein resides in the cell membrane. It functions in the pathway glycan biosynthesis; sucrose metabolism. Responsible for the transport of sucrose into the cell, with the concomitant uptake of protons (symport system). May also transport other glucosides. The sequence is that of Sucrose transport protein SUT2 (SUT2) from Oryza sativa subsp. indica (Rice).